The sequence spans 351 residues: CCN family member 3 (351 aa).

A signal peptide spans 1-24 (METGGGQGLPVLLLLLLLLRPCEV). The IGFBP N-terminal domain maps to 27–101 (REAACPRPCG…GGGAGICMVL (75 aa)). Cystine bridges form between Cys31–Cys57, Cys35–Cys59, Cys39–Cys60, Cys46–Cys63, Cys71–Cys85, and Cys77–Cys98. One can recognise a VWFC domain in the interval 104-170 (DNCVFDGMIY…GECCEKWVCD (67 aa)). Positions 201–246 (NCIEQTTEWSACSKSCGMGFSTRVTNRNQQCEMVKQTRLCMMRPCE) constitute a TSP type-1 domain. Disulfide bonds link Cys258–Cys295, Cys275–Cys309, Cys286–Cys325, Cys289–Cys327, and Cys294–Cys331. Residues 258 to 332 (CIQTKKSMKA…NTCVCHGNCP (75 aa)) form the CTCK domain. An N-linked (GlcNAc...) asparagine glycan is attached at Asn274.

This sequence belongs to the CCN family. In terms of tissue distribution, brain and heart, and at a lower level in muscle and intestine, in the embryo. Lung and less so in brain and spleen, in adult chicken.

It localises to the secreted. The protein localises to the cytoplasm. It is found in the cell junction. The protein resides in the gap junction. In terms of biological role, immediate-early protein likely to play a role in cell growth regulation. Its overexpression is associated with tumorigenesis and expression of a N-terminal-truncated version of CCN3 gene in chicken embryonic fibroblasts (CEF) is sufficient to induce the transformation of CEF in vitro. This Gallus gallus (Chicken) protein is CCN family member 3 (CCN3).